A 91-amino-acid chain; its full sequence is Cell division topological specificity factor (91 aa).

This sequence belongs to the MinE family.

Functionally, prevents the cell division inhibition by proteins MinC and MinD at internal division sites while permitting inhibition at polar sites. This ensures cell division at the proper site by restricting the formation of a division septum at the midpoint of the long axis of the cell. The polypeptide is Cell division topological specificity factor (Caldanaerobacter subterraneus subsp. tengcongensis (strain DSM 15242 / JCM 11007 / NBRC 100824 / MB4) (Thermoanaerobacter tengcongensis)).